The following is a 287-amino-acid chain: MYLQYLVLSLFSTTVYGGFNLNFDSKGDALENAAIDFTGEDVAVIKENERESFGITDGPLKDACGKVSGRRPDHVWLYKPTLWGDMYTMYNWREVTRTLRPIGARVVGKEQKPTIVSSQIYKNRSSRTVKMNGKISQEVTNTVENKWSQTHGLSVTASMTYSFKVVEASMEIGYTSEWGKEETKSESVAVGQEMGFEVELEPGESVEAVLSATKGSMIVDVTYRATLDGCCAINYNKGWKGHHYYCYPIGLVQDTGKLKKHVDIKETIKIGFYSDSHVIVRDKHAKK.

An N-terminal signal peptide occupies residues M1–G17.

Belongs to the caterpillar 8 family. Contains 2 disulfide bonds. Expressed by the venom apparatus.

The protein localises to the secreted. Its function is as follows. Probable toxin. The protein is U-megalopygitoxin(8)-Mc8 of Megalopyge crispata (Black-waved flannel moth).